Consider the following 369-residue polypeptide: RNA-binding protein rnp24 (369 aa).

Disordered stretches follow at residues 1–77 (MEPI…KKKE), 200–219 (TDFS…TASI), and 304–369 (RMRN…IKFD). An RRM 1 domain is found at 105-206 (WGIWVGNLSF…KSNTDFSGRP (102 aa)). Positions 209-219 (PANTLSKTASI) are enriched in polar residues. An RRM 2 domain is found at 228 to 310 (SILFVGNLDF…RSKRMRNKSP (83 aa)). Residues 325 to 341 (QEDKPNFKRARKIDPRS) are compositionally biased toward basic and acidic residues. The span at 346 to 357 (AALAKAQRSSAA) shows a compositional bias: low complexity.

The protein localises to the nucleus. In Schizosaccharomyces pombe (strain 972 / ATCC 24843) (Fission yeast), this protein is RNA-binding protein rnp24 (rnp24).